The following is a 411-amino-acid chain: Tyrosine--tRNA ligase (411 aa).

Tyr-33 lines the L-tyrosine pocket. The short motif at 38 to 47 is the 'HIGH' region element; sequence PTADSLHLGN. Residues Tyr-160 and Gln-164 each coordinate L-tyrosine. A 'KMSKS' region motif is present at residues 222–226; sequence KFGKS. Residue Lys-225 coordinates ATP. An S4 RNA-binding domain is found at 346–410; the sequence is VNLVNFLVEN…GKKKILICKV (65 aa).

This sequence belongs to the class-I aminoacyl-tRNA synthetase family. TyrS type 1 subfamily. As to quaternary structure, homodimer.

The protein resides in the cytoplasm. The catalysed reaction is tRNA(Tyr) + L-tyrosine + ATP = L-tyrosyl-tRNA(Tyr) + AMP + diphosphate + H(+). Functionally, catalyzes the attachment of tyrosine to tRNA(Tyr) in a two-step reaction: tyrosine is first activated by ATP to form Tyr-AMP and then transferred to the acceptor end of tRNA(Tyr). The protein is Tyrosine--tRNA ligase of Mycoplasmopsis synoviae (strain 53) (Mycoplasma synoviae).